The primary structure comprises 99 residues: Cytochrome c oxidase subunit 4 isoform 1, mitochondrial (99 aa).

Residues 1-73 (SVVKREDFSL…TFAEMNRGSN (73 aa)) lie on the Mitochondrial matrix side of the membrane. Lys-4 carries the post-translational modification N6-acetyllysine; alternate. Lys-4 carries the post-translational modification N6-succinyllysine; alternate. Position 28 is an N6-acetyllysine (Lys-28). Phosphoserine is present on residues Ser-31 and Ser-33. Lys-35 carries the N6-acetyllysine; alternate modification. Lys-35 is modified (N6-succinyllysine; alternate). Lys-42 is subject to N6-acetyllysine. A helical membrane pass occupies residues 74–99 (EWKTVVGTATFFIGFTALIIMWQKRY).

The protein belongs to the cytochrome c oxidase IV family. As to quaternary structure, component of the cytochrome c oxidase (complex IV, CIV), a multisubunit enzyme composed of 14 subunits. The complex is composed of a catalytic core of 3 subunits MT-CO1, MT-CO2 and MT-CO3, encoded in the mitochondrial DNA, and 11 supernumerary subunits COX4I, COX5A, COX5B, COX6A, COX6B, COX6C, COX7A, COX7B, COX7C, COX8 and NDUFA4, which are encoded in the nuclear genome. The complex exists as a monomer or a dimer and forms supercomplexes (SCs) in the inner mitochondrial membrane with NADH-ubiquinone oxidoreductase (complex I, CI) and ubiquinol-cytochrome c oxidoreductase (cytochrome b-c1 complex, complex III, CIII), resulting in different assemblies (supercomplex SCI(1)III(2)IV(1) and megacomplex MCI(2)III(2)IV(2)). Interacts with PHB2; the interaction decreases in absence of SPHK2. Interacts with AFG1L. Interacts with ABCB7; this interaction allows the regulation of cellular iron homeostasis and cellular reactive oxygen species (ROS) levels in cardiomyocytes. Interacts with FLVCR2; this interaction occurs in the absence of heme and is disrupted upon heme binding. Interacts with IRGC.

The protein localises to the mitochondrion inner membrane. The protein operates within energy metabolism; oxidative phosphorylation. Functionally, component of the cytochrome c oxidase, the last enzyme in the mitochondrial electron transport chain which drives oxidative phosphorylation. The respiratory chain contains 3 multisubunit complexes succinate dehydrogenase (complex II, CII), ubiquinol-cytochrome c oxidoreductase (cytochrome b-c1 complex, complex III, CIII) and cytochrome c oxidase (complex IV, CIV), that cooperate to transfer electrons derived from NADH and succinate to molecular oxygen, creating an electrochemical gradient over the inner membrane that drives transmembrane transport and the ATP synthase. Cytochrome c oxidase is the component of the respiratory chain that catalyzes the reduction of oxygen to water. Electrons originating from reduced cytochrome c in the intermembrane space (IMS) are transferred via the dinuclear copper A center (CU(A)) of subunit 2 and heme A of subunit 1 to the active site in subunit 1, a binuclear center (BNC) formed by heme A3 and copper B (CU(B)). The BNC reduces molecular oxygen to 2 water molecules using 4 electrons from cytochrome c in the IMS and 4 protons from the mitochondrial matrix. This chain is Cytochrome c oxidase subunit 4 isoform 1, mitochondrial (COX4I1), found in Trachypithecus cristatus (Silvered leaf-monkey).